The chain runs to 283 residues: Phosphate import ATP-binding protein PstB 1 (283 aa).

A compositionally biased stretch (acidic residues) spans 1 to 16 (MSSDDTTDPTADDESF). The segment at 1 to 35 (MSSDDTTDPTADDESFTDSPVAGLEQSTTTRGSGR) is disordered. The region spanning 38 to 278 (ISARNINVWY…PSSERVENYI (241 aa)) is the ABC transporter domain. 70-77 (GPSGCGKS) serves as a coordination point for ATP.

This sequence belongs to the ABC transporter superfamily. Phosphate importer (TC 3.A.1.7) family. As to quaternary structure, the complex is composed of two ATP-binding proteins (PstB), two transmembrane proteins (PstC and PstA) and a solute-binding protein (PstS).

It localises to the cell membrane. It carries out the reaction phosphate(out) + ATP + H2O = ADP + 2 phosphate(in) + H(+). Functionally, part of the ABC transporter complex PstSACB involved in phosphate import. Responsible for energy coupling to the transport system. This chain is Phosphate import ATP-binding protein PstB 1, found in Natronomonas pharaonis (strain ATCC 35678 / DSM 2160 / CIP 103997 / JCM 8858 / NBRC 14720 / NCIMB 2260 / Gabara) (Halobacterium pharaonis).